A 188-amino-acid polypeptide reads, in one-letter code: Single-stranded DNA-binding protein DdrB (188 aa).

A disordered region spans residues 140-188 (YAVPGGAAGNGQGRPAPQGQPAQARPQATAARPAARPPVQPGQEEETPF). Residues 152–173 (GRPAPQGQPAQARPQATAARPA) are compositionally biased toward low complexity.

In terms of assembly, homopentamer arranged in a ring-structure; DNA binds between subunits and along the top of the ring. The pentamers self-associate to coat ssDNA in higher-ordered structures; oligomerization facilitates the assembly of extended nucleoprotein complexes. Self-assembly does not however require ssDNA-binding. Interacts with SSB.

Functionally, ssDNA-binding protein that contributes to the ionizing radiation resistance of D.radiodurans. Plays a role in DNA repair and genome reconstitution in a RecA-independent process. Required for recovery from severe genomic fragmentation as a result of exposure to severe levels of ionizing radiation. Binds ssDNA but not dsDNA. Stimulates annealing of complementary ssDNA. Does not complement an ssb disruption. The protein is Single-stranded DNA-binding protein DdrB (ddrB) of Deinococcus radiodurans (strain ATCC 13939 / DSM 20539 / JCM 16871 / CCUG 27074 / LMG 4051 / NBRC 15346 / NCIMB 9279 / VKM B-1422 / R1).